The primary structure comprises 452 residues: Isocitrate dehydrogenase [NADP], mitochondrial (452 aa).

A mitochondrion-targeting transit peptide spans M1–Y39. N6-acetyllysine occurs at positions 45, 48, 67, and 69. Residues K80 and K106 each carry the N6-acetyllysine; alternate modification. N6-succinyllysine; alternate occurs at positions 80 and 106. NADP(+) contacts are provided by residues T115–T117 and R122. Residue T117 coordinates D-threo-isocitrate. D-threo-isocitrate contacts are provided by residues S134 to R140 and R149. N6-acetyllysine is present on K155. Position 166 is an N6-acetyllysine; alternate (K166). N6-succinyllysine; alternate is present on K166. R172 contributes to the D-threo-isocitrate binding site. An N6-acetyllysine; alternate mark is found at K180 and K193. K180 and K193 each carry N6-succinyllysine; alternate. K199 is subject to N6-acetyllysine. Residue K256 is modified to N6-acetyllysine; alternate. K256 carries the N6-succinyllysine; alternate modification. Residues K263, K272, K275, and K280 each carry the N6-acetyllysine modification. K282 carries the post-translational modification N6-acetyllysine; alternate. K282 carries the N6-succinyllysine; alternate modification. D291 is a Mn(2+) binding site. An NADP(+)-binding site is contributed by K299. D314 contributes to the Mn(2+) binding site. Residues G349–H354 and N367 contribute to the NADP(+) site. K384 bears the N6-acetyllysine; alternate mark. K384 bears the N6-succinyllysine; alternate mark. 3 positions are modified to N6-acetyllysine: K400, K413, and K442.

The protein belongs to the isocitrate and isopropylmalate dehydrogenases family. As to quaternary structure, homodimer. The cofactor is Mg(2+). It depends on Mn(2+) as a cofactor. In terms of processing, acetylation at Lys-413 dramatically reduces catalytic activity. Deacetylated by SIRT3.

The protein localises to the mitochondrion. It carries out the reaction D-threo-isocitrate + NADP(+) = 2-oxoglutarate + CO2 + NADPH. In terms of biological role, plays a role in intermediary metabolism and energy production. It may tightly associate or interact with the pyruvate dehydrogenase complex. This is Isocitrate dehydrogenase [NADP], mitochondrial (IDH2) from Homo sapiens (Human).